A 121-amino-acid polypeptide reads, in one-letter code: Dihydroneopterin aldolase (121 aa).

2 residues coordinate substrate: E25 and M114.

This sequence belongs to the archaeal dihydroneopterin aldolase family. Homotetramer.

The enzyme catalyses 7,8-dihydroneopterin = 6-hydroxymethyl-7,8-dihydropterin + glycolaldehyde. The protein operates within cofactor biosynthesis; 5,6,7,8-tetrahydromethanopterin biosynthesis. Its function is as follows. Catalyzes the conversion of 7,8-dihydroneopterin (H2Neo) to 6-hydroxymethyl-7,8-dihydropterin (6-HMD). In Methanocaldococcus jannaschii (strain ATCC 43067 / DSM 2661 / JAL-1 / JCM 10045 / NBRC 100440) (Methanococcus jannaschii), this protein is Dihydroneopterin aldolase.